The primary structure comprises 215 residues: 3-isopropylmalate dehydratase small subunit (215 aa).

Belongs to the LeuD family. LeuD type 1 subfamily. Heterodimer of LeuC and LeuD.

It catalyses the reaction (2R,3S)-3-isopropylmalate = (2S)-2-isopropylmalate. It participates in amino-acid biosynthesis; L-leucine biosynthesis; L-leucine from 3-methyl-2-oxobutanoate: step 2/4. Its function is as follows. Catalyzes the isomerization between 2-isopropylmalate and 3-isopropylmalate, via the formation of 2-isopropylmaleate. This is 3-isopropylmalate dehydratase small subunit from Xylella fastidiosa (strain 9a5c).